Here is a 321-residue protein sequence, read N- to C-terminus: p-hydroxybenzoic acid efflux pump subunit AaeA (321 aa).

The chain crosses the membrane as a helical span at residues 22–42; sequence VVITLVIVLCAIVAIFRVWAF.

It belongs to the membrane fusion protein (MFP) (TC 8.A.1) family.

Its subcellular location is the cell inner membrane. Forms an efflux pump with AaeB. The sequence is that of p-hydroxybenzoic acid efflux pump subunit AaeA from Pectobacterium atrosepticum (strain SCRI 1043 / ATCC BAA-672) (Erwinia carotovora subsp. atroseptica).